The primary structure comprises 162 residues: Ribosomal RNA large subunit methyltransferase H (162 aa).

Gly108 provides a ligand contact to S-adenosyl-L-methionine.

Belongs to the RNA methyltransferase RlmH family. In terms of assembly, homodimer.

The protein localises to the cytoplasm. The catalysed reaction is pseudouridine(1915) in 23S rRNA + S-adenosyl-L-methionine = N(3)-methylpseudouridine(1915) in 23S rRNA + S-adenosyl-L-homocysteine + H(+). Functionally, specifically methylates the pseudouridine at position 1915 (m3Psi1915) in 23S rRNA. The sequence is that of Ribosomal RNA large subunit methyltransferase H from Methylobacterium sp. (strain 4-46).